The sequence spans 335 residues: Glutamyl-tRNA reductase (335 aa).

Substrate is bound by residues 60–63 (TCHR), Ser110, 115–117 (ETE), and Gln121. Cys61 acts as the Nucleophile in catalysis. 189-194 (GYSEIN) serves as a coordination point for NADP(+).

The protein belongs to the glutamyl-tRNA reductase family. As to quaternary structure, homodimer.

The enzyme catalyses (S)-4-amino-5-oxopentanoate + tRNA(Glu) + NADP(+) = L-glutamyl-tRNA(Glu) + NADPH + H(+). It participates in porphyrin-containing compound metabolism; protoporphyrin-IX biosynthesis; 5-aminolevulinate from L-glutamyl-tRNA(Glu): step 1/2. Functionally, catalyzes the NADPH-dependent reduction of glutamyl-tRNA(Glu) to glutamate 1-semialdehyde (GSA). The sequence is that of Glutamyl-tRNA reductase from Chlamydia trachomatis serovar L2 (strain ATCC VR-902B / DSM 19102 / 434/Bu).